A 103-amino-acid chain; its full sequence is Cell division suppressor protein YneA (103 aa).

The LysM domain occupies 36–87 (VKIEVQEGDTLWELADRIKGGKTADKHKFIEWVADKNNLPTSVIKPGDVLIL).

It belongs to the YneA family.

The protein localises to the cytoplasm. Inhibits cell division during the SOS response. Affects a later stage of the cell division protein assembly, after the assembly of the Z ring, by probably suppressing recruitment of FtsL and/or DivIC to the division machinery. The protein is Cell division suppressor protein YneA of Bacillus licheniformis (strain ATCC 14580 / DSM 13 / JCM 2505 / CCUG 7422 / NBRC 12200 / NCIMB 9375 / NCTC 10341 / NRRL NRS-1264 / Gibson 46).